The primary structure comprises 247 residues: Probable transcriptional regulatory protein Gura_1416 (247 aa).

This sequence belongs to the TACO1 family.

The protein resides in the cytoplasm. This is Probable transcriptional regulatory protein Gura_1416 from Geotalea uraniireducens (strain Rf4) (Geobacter uraniireducens).